Reading from the N-terminus, the 512-residue chain is Maturase K (512 aa).

Belongs to the intron maturase 2 family. MatK subfamily.

It localises to the plastid. The protein resides in the chloroplast. Its function is as follows. Usually encoded in the trnK tRNA gene intron. Probably assists in splicing its own and other chloroplast group II introns. This Oenothera glazioviana (Large-flowered evening primrose) protein is Maturase K.